The chain runs to 289 residues: Protease HtpX (289 aa).

A run of 2 helical transmembrane segments spans residues 7 to 27 (LFLL…NIIF) and 38 to 58 (GGIL…SLFM). His144 serves as a coordination point for Zn(2+). The active site involves Glu145. His148 is a Zn(2+) binding site. Helical transmembrane passes span 155 to 175 (VTMT…SRII) and 194 to 214 (LVFW…ATMI). A Zn(2+)-binding site is contributed by Glu223.

It belongs to the peptidase M48B family. The cofactor is Zn(2+).

The protein resides in the cell inner membrane. This Actinobacillus pleuropneumoniae serotype 5b (strain L20) protein is Protease HtpX.